Consider the following 473-residue polypeptide: Trigger factor (473 aa).

The PPIase FKBP-type domain maps to 174 to 261 (GDIAVVSFKG…LKDLKEKELP (88 aa)). The interval 437–473 (EISEKVTKSTTKSKTKSKTKKESQAKSEPNKKKKEKK) is disordered. The span at 456–466 (KKESQAKSEPN) shows a compositional bias: basic and acidic residues.

This sequence belongs to the FKBP-type PPIase family. Tig subfamily.

It is found in the cytoplasm. The enzyme catalyses [protein]-peptidylproline (omega=180) = [protein]-peptidylproline (omega=0). Involved in protein export. Acts as a chaperone by maintaining the newly synthesized protein in an open conformation. Functions as a peptidyl-prolyl cis-trans isomerase. The chain is Trigger factor from Prochlorococcus marinus (strain MIT 9515).